The chain runs to 468 residues: Putative ankyrin repeat protein R580 (468 aa).

ANK repeat units follow at residues 12-41 (DYFD…TLID), 189-218 (VINK…EINC), 249-278 (CHFD…KINS), 336-365 (SFDN…NINF), 367-393 (NMPT…DLEI), and 394-423 (HGTL…KFSL).

This chain is Putative ankyrin repeat protein R580, found in Acanthamoeba polyphaga (Amoeba).